Consider the following 325-residue polypeptide: Replication factor C small subunit (325 aa).

Position 54–61 (54–61 (GPAGTGKT)) interacts with ATP.

This sequence belongs to the activator 1 small subunits family. RfcS subfamily. In terms of assembly, heteromultimer composed of small subunits (RfcS) and large subunits (RfcL).

Part of the RFC clamp loader complex which loads the PCNA sliding clamp onto DNA. This is Replication factor C small subunit from Haloarcula marismortui (strain ATCC 43049 / DSM 3752 / JCM 8966 / VKM B-1809) (Halobacterium marismortui).